A 437-amino-acid chain; its full sequence is Double-stranded RNA-binding protein 3 (437 aa).

Residues 1–22 (MKKKSAPTPLPPETANTSPAPI) are disordered. DRBM domains are found at residues 35–104 (VFKS…EIVK) and 120–187 (LCKN…AIQG). Basic and acidic residues-rich tracts occupy residues 288–310 (AKRV…ENQH) and 320–330 (DEARVEQEPSR). The tract at residues 288–331 (AKRVEDEPPRDIEMVQPDKENQHSDAALVQPDDEARVEQEPSRD) is disordered.

In terms of biological role, binds double-stranded RNA. The protein is Double-stranded RNA-binding protein 3 (DRB3) of Oryza sativa subsp. japonica (Rice).